We begin with the raw amino-acid sequence, 244 residues long: Leucyl/phenylalanyl-tRNA--protein transferase (244 aa).

The protein belongs to the L/F-transferase family.

The protein localises to the cytoplasm. The catalysed reaction is N-terminal L-lysyl-[protein] + L-leucyl-tRNA(Leu) = N-terminal L-leucyl-L-lysyl-[protein] + tRNA(Leu) + H(+). The enzyme catalyses N-terminal L-arginyl-[protein] + L-leucyl-tRNA(Leu) = N-terminal L-leucyl-L-arginyl-[protein] + tRNA(Leu) + H(+). It carries out the reaction L-phenylalanyl-tRNA(Phe) + an N-terminal L-alpha-aminoacyl-[protein] = an N-terminal L-phenylalanyl-L-alpha-aminoacyl-[protein] + tRNA(Phe). Functionally, functions in the N-end rule pathway of protein degradation where it conjugates Leu, Phe and, less efficiently, Met from aminoacyl-tRNAs to the N-termini of proteins containing an N-terminal arginine or lysine. This is Leucyl/phenylalanyl-tRNA--protein transferase from Janthinobacterium sp. (strain Marseille) (Minibacterium massiliensis).